We begin with the raw amino-acid sequence, 322 residues long: Tetraacyldisaccharide 4'-kinase (322 aa).

Residue 54 to 61 (SVGGTGKT) coordinates ATP.

The protein belongs to the LpxK family.

It carries out the reaction a lipid A disaccharide + ATP = a lipid IVA + ADP + H(+). It participates in glycolipid biosynthesis; lipid IV(A) biosynthesis; lipid IV(A) from (3R)-3-hydroxytetradecanoyl-[acyl-carrier-protein] and UDP-N-acetyl-alpha-D-glucosamine: step 6/6. Its function is as follows. Transfers the gamma-phosphate of ATP to the 4'-position of a tetraacyldisaccharide 1-phosphate intermediate (termed DS-1-P) to form tetraacyldisaccharide 1,4'-bis-phosphate (lipid IVA). This is Tetraacyldisaccharide 4'-kinase from Francisella tularensis subsp. holarctica (strain FTNF002-00 / FTA).